We begin with the raw amino-acid sequence, 258 residues long: Imidazole glycerol phosphate synthase subunit HisF (258 aa).

Active-site residues include aspartate 12 and aspartate 131.

Belongs to the HisA/HisF family. Heterodimer of HisH and HisF.

Its subcellular location is the cytoplasm. It carries out the reaction 5-[(5-phospho-1-deoxy-D-ribulos-1-ylimino)methylamino]-1-(5-phospho-beta-D-ribosyl)imidazole-4-carboxamide + L-glutamine = D-erythro-1-(imidazol-4-yl)glycerol 3-phosphate + 5-amino-1-(5-phospho-beta-D-ribosyl)imidazole-4-carboxamide + L-glutamate + H(+). It participates in amino-acid biosynthesis; L-histidine biosynthesis; L-histidine from 5-phospho-alpha-D-ribose 1-diphosphate: step 5/9. In terms of biological role, IGPS catalyzes the conversion of PRFAR and glutamine to IGP, AICAR and glutamate. The HisF subunit catalyzes the cyclization activity that produces IGP and AICAR from PRFAR using the ammonia provided by the HisH subunit. This chain is Imidazole glycerol phosphate synthase subunit HisF, found in Paenarthrobacter aurescens (strain TC1).